The following is a 200-amino-acid chain: Holliday junction branch migration complex subunit RuvA (200 aa).

The interval 1-64 (MFAYFKGSLV…EDALQLYGFF (64 aa)) is domain I. A domain II region spans residues 65-143 (KEEERQLFRL…KLPLVTPAAG (79 aa)). The segment at 143 to 147 (GKAAM) is flexible linker. Positions 148–200 (PSHHVKDDAVHALVTLGFSRLLAQKAVSALLEEKPEQSVEEVIKYALATIHNS) are domain III.

The protein belongs to the RuvA family. As to quaternary structure, homotetramer. Forms an RuvA(8)-RuvB(12)-Holliday junction (HJ) complex. HJ DNA is sandwiched between 2 RuvA tetramers; dsDNA enters through RuvA and exits via RuvB. An RuvB hexamer assembles on each DNA strand where it exits the tetramer. Each RuvB hexamer is contacted by two RuvA subunits (via domain III) on 2 adjacent RuvB subunits; this complex drives branch migration. In the full resolvosome a probable DNA-RuvA(4)-RuvB(12)-RuvC(2) complex forms which resolves the HJ.

The protein resides in the cytoplasm. Its function is as follows. The RuvA-RuvB-RuvC complex processes Holliday junction (HJ) DNA during genetic recombination and DNA repair, while the RuvA-RuvB complex plays an important role in the rescue of blocked DNA replication forks via replication fork reversal (RFR). RuvA specifically binds to HJ cruciform DNA, conferring on it an open structure. The RuvB hexamer acts as an ATP-dependent pump, pulling dsDNA into and through the RuvAB complex. HJ branch migration allows RuvC to scan DNA until it finds its consensus sequence, where it cleaves and resolves the cruciform DNA. The protein is Holliday junction branch migration complex subunit RuvA of Chlorobium phaeobacteroides (strain DSM 266 / SMG 266 / 2430).